The sequence spans 547 residues: Chaperonin GroEL (547 aa).

Residues 30–33 (TLGP), Lys-51, 87–91 (DGTTT), Gly-415, 479–481 (NAA), and Asp-495 contribute to the ATP site. The tract at residues 524-547 (APKKDEPTPPAAGGGMGGMGGMDF) is disordered. Residues 535–547 (AGGGMGGMGGMDF) show a composition bias toward gly residues.

This sequence belongs to the chaperonin (HSP60) family. As to quaternary structure, forms a cylinder of 14 subunits composed of two heptameric rings stacked back-to-back. Interacts with the co-chaperonin GroES.

It is found in the cytoplasm. It catalyses the reaction ATP + H2O + a folded polypeptide = ADP + phosphate + an unfolded polypeptide.. Functionally, together with its co-chaperonin GroES, plays an essential role in assisting protein folding. The GroEL-GroES system forms a nano-cage that allows encapsulation of the non-native substrate proteins and provides a physical environment optimized to promote and accelerate protein folding. The polypeptide is Chaperonin GroEL (Xylella fastidiosa (strain 9a5c)).